A 144-amino-acid chain; its full sequence is 3-dehydroquinate dehydratase (144 aa).

Y24 serves as the catalytic Proton acceptor. 3 residues coordinate substrate: N76, H82, and D89. The active-site Proton donor is the H102. Residues 103-104 (LS) and R113 contribute to the substrate site.

This sequence belongs to the type-II 3-dehydroquinase family. In terms of assembly, homododecamer.

It catalyses the reaction 3-dehydroquinate = 3-dehydroshikimate + H2O. The protein operates within metabolic intermediate biosynthesis; chorismate biosynthesis; chorismate from D-erythrose 4-phosphate and phosphoenolpyruvate: step 3/7. Its function is as follows. Catalyzes a trans-dehydration via an enolate intermediate. The chain is 3-dehydroquinate dehydratase from Bordetella petrii (strain ATCC BAA-461 / DSM 12804 / CCUG 43448).